Here is a 707-residue protein sequence, read N- to C-terminus: Eomesodermin homolog (707 aa).

Residues 27 to 42 (GGGGGGGGGGGGGGGS) are compositionally biased toward gly residues. Positions 27 to 125 (GGGGGGGGGG…GSPCAEEELP (99 aa)) are disordered. Over residues 73–93 (AGSAEPAGAGAGAPAAMLSDA) the composition is skewed to low complexity. A Phosphoserine modification is found at Ser-117. Residues 278 to 458 (LWLKFHRHQT…HNPFAKGFRD (181 aa)) constitute a DNA-binding region (T-box). Thr-473 is modified (phosphothreonine). The tract at residues 592–707 (AMAGWGGRGA…GAYYAFYTSP (116 aa)) is required for transcription activation. A disordered region spans residues 642-689 (TPPSIKSLDSSDSGVYNSACKRKRLSPSTPSNGNSPPIKCEDINTEEY). Over residues 648-657 (SLDSSDSGVY) the composition is skewed to polar residues. Low complexity predominate over residues 667-678 (SPSTPSNGNSPP). Positions 680–689 (KCEDINTEEY) are enriched in basic and acidic residues.

In terms of tissue distribution, expressed in CD8+ T-cells.

Its subcellular location is the nucleus. Functions as a transcriptional activator playing a crucial role during development. Functions in trophoblast differentiation and later in gastrulation, regulating both mesoderm delamination and endoderm specification. Plays a role in brain development being required for the specification and the proliferation of the intermediate progenitor cells and their progeny in the cerebral cortex. Required for differentiation and migration of unipolar dendritic brush cells. Also involved in the differentiation of CD8+ T-cells during immune response regulating the expression of lytic effector genes. This chain is Eomesodermin homolog (Eomes), found in Mus musculus (Mouse).